A 531-amino-acid chain; its full sequence is Unconventional prefoldin RPB5 interactor (531 aa).

Met-1 carries the N-acetylmethionine modification. 4 disordered regions span residues 1–24, 224–381, 408–470, and 500–531; these read MEPPSEPEPEPQPLAEASAAAPLR, ELES…ELPA, KSRS…SGVS, and TIPERKEVPSEVSEEPTKRVSKFRAARLQQRS. Residues 13–24 show a composition bias toward low complexity; sequence PLAEASAAAPLR. Composition is skewed to polar residues over residues 257-266 and 280-296; these read SPVTDSSAAS and GQVNSLNYSVNGSNSYH. Over residues 300 to 319 the composition is skewed to acidic residues; the sequence is DDDEEEEDDDDDDDEDDDNE. Ser-369 carries the phosphoserine; by RPS6KB1 modification. Positions 414 to 424 are enriched in polar residues; that stretch reads NSVCSDTSESS. Phosphoserine is present on Ser-439.

This sequence belongs to the RNA polymerase II subunit 5-mediating protein family. In terms of assembly, homodimer. Component of the PAQosome complex which is responsible for the biogenesis of several protein complexes and which consists of R2TP complex members RUVBL1, RUVBL2, RPAP3 and PIH1D1, URI complex members PFDN2, PFDN6, PDRG1, UXT and URI1 as well as ASDURF, POLR2E and DNAAF10/WDR92. Interacts with POLR2E/RPB5, RUVBL2 and RUVBL1. Interacts with PFDN2, PFDN4 and STAP1; the interactions are phosphorylation-dependent and occur in a growth-dependent manner in the mitochondrion. Interacts with UXT. Interacts with PPP1CC; the interaction is phosphorylation-dependent and occurs in a growth factor-dependent manner. Interacts (via the middle C-terminal region) with GTF2F1 and GTF2F2. Interacts with DMAP1. Interacts with TSC1 and TSC2. Interacts with PRPF8 and EFTUD2 in a ZNHIT2-dependent manner. In terms of processing, phosphorylation occurs in response to androgen treatment in prostate cancer cells in a mTOR-dependent manner. Phosphorylated; hyperhosphorylated in mitochondria in a mTORC-dependent signaling pathway. Phosphorylated at Ser-369 by RPS6KB1 in a growth factor- and rapamycin-dependent manner. S6K1-mediated mitochondrial phosphorylation at Ser-369 disrupts the URI1-PPP1CC complex in the mitochondrion, relieves PPP1CC phosphatase inhibition activity and hence engages a negative feedback diminishing RPS6KB1 kinase activity, preventing sustained S6K1-dependent signaling. Phosphorylated. Phosphorylation occurs essentially on serine residues. Expressed in the spinal cord, ganglia, choroid plexus and olfactors epithelium of the developing brain. Expressed in skin, lung, kidney, testis and muscles (at protein level). Expressed strongly in brain and kidney. Expressed weakly in skeletal muscle, lung and liver.

Its subcellular location is the nucleus. The protein localises to the cytoplasm. It localises to the mitochondrion. It is found in the cell projection. The protein resides in the dendrite. Functionally, involved in gene transcription regulation. Acts as a transcriptional repressor in concert with the corepressor UXT to regulate androgen receptor (AR) transcription. May act as a tumor suppressor to repress AR-mediated gene transcription and to inhibit anchorage-independent growth in prostate cancer cells. Required for cell survival in ovarian cancer cells. Together with UXT, associates with chromatin to the NKX3-1 promoter region. Plays a central role in maintaining S6K1 signaling and BAD phosphorylation under normal growth conditions thereby protecting cells from potential deleterious effects of sustained S6K1 signaling. The URI1-PPP1CC complex acts as a central component of a negative feedback mechanism that counteracts excessive S6K1 survival signaling to BAD in response to growth factors. Mediates inhibition of PPP1CC phosphatase activity in mitochondria. Coordinates the regulation of nutrient-sensitive gene expression availability in a mTOR-dependent manner. Seems to be a scaffolding protein able to assemble a prefoldin-like complex that contains PFDs and proteins with roles in transcription and ubiquitination. This Mus musculus (Mouse) protein is Unconventional prefoldin RPB5 interactor (Uri1).